We begin with the raw amino-acid sequence, 188 residues long: Elongation factor P-like protein (188 aa).

This sequence belongs to the elongation factor P family.

This is Elongation factor P-like protein from Aliivibrio fischeri (strain MJ11) (Vibrio fischeri).